Reading from the N-terminus, the 128-residue chain is UPF0325 protein YaeH (128 aa).

Belongs to the UPF0325 family.

In Salmonella agona (strain SL483), this protein is UPF0325 protein YaeH.